We begin with the raw amino-acid sequence, 508 residues long: Replication factor C large subunit (508 aa).

Residue 43–50 participates in ATP binding; that stretch reads GSPGIGKT. The disordered stretch occupies residues 425–508; it reads AVEHSGGVFE…DQQSGLSDFM (84 aa). 2 stretches are compositionally biased toward acidic residues: residues 443–461 and 483–500; these read GDSD…EESG and TTDD…DDDQ.

This sequence belongs to the activator 1 small subunits family. RfcL subfamily. In terms of assembly, heteromultimer composed of small subunits (RfcS) and large subunits (RfcL).

Functionally, part of the RFC clamp loader complex which loads the PCNA sliding clamp onto DNA. The polypeptide is Replication factor C large subunit (Haloarcula marismortui (strain ATCC 43049 / DSM 3752 / JCM 8966 / VKM B-1809) (Halobacterium marismortui)).